The chain runs to 394 residues: Choline/ethanolamine kinase (394 aa).

Residues 1–42 form a disordered region; it reads MAADGTGVVGGGAVGGGLPKDGLQDAKCPEPIPNRRRASSLS. Alanine 2 bears the N-acetylalanine mark. The span at 7 to 19 shows a compositional bias: gly residues; that stretch reads GVVGGGAVGGGLP. Residues 75–81, arginine 104, 146–152, glutamine 244, and aspartate 264 contribute to the ATP site; these read SGGLSNL and QYLPSRP. Substrate is bound at residue 77-79; that stretch reads GLS.

This sequence belongs to the choline/ethanolamine kinase family. Homodimer, and heterodimer with CHKA. As to expression, expressed ubiquitously with the highest level in testis.

The enzyme catalyses choline + ATP = phosphocholine + ADP + H(+). It catalyses the reaction ethanolamine + ATP = phosphoethanolamine + ADP + H(+). It participates in phospholipid metabolism; phosphatidylethanolamine biosynthesis; phosphatidylethanolamine from ethanolamine: step 1/3. Its function is as follows. Has a key role in phospholipid metabolism, and catalyzes the first step of phosphatidylethanolamine and phosphatidylcholine biosynthesis. This Mus musculus (Mouse) protein is Choline/ethanolamine kinase (Chkb).